The chain runs to 108 residues: UPF0060 membrane protein BH2744 (108 aa).

4 helical membrane passes run 6–26 (TLFLLAGLAEIGGGYLIWLWL), 31–51 (PVYLGLFGAVALALYGVIATF), 60–80 (VYAAYGGVFIFLAVLWGWWID), and 86–106 (TYDWIGAVICLVGVGIMLWAP).

This sequence belongs to the UPF0060 family.

It localises to the cell membrane. This is UPF0060 membrane protein BH2744 from Halalkalibacterium halodurans (strain ATCC BAA-125 / DSM 18197 / FERM 7344 / JCM 9153 / C-125) (Bacillus halodurans).